The chain runs to 122 residues: Large ribosomal subunit protein uL14 (122 aa).

Belongs to the universal ribosomal protein uL14 family. As to quaternary structure, part of the 50S ribosomal subunit. Forms a cluster with proteins L3 and L19. In the 70S ribosome, L14 and L19 interact and together make contacts with the 16S rRNA in bridges B5 and B8.

In terms of biological role, binds to 23S rRNA. Forms part of two intersubunit bridges in the 70S ribosome. The chain is Large ribosomal subunit protein uL14 from Paracidovorax citrulli (strain AAC00-1) (Acidovorax citrulli).